An 87-amino-acid chain; its full sequence is U1-theraphotoxin-Ct1a (87 aa).

The first 23 residues, 1 to 23 (MKTFTLIAILTCAVLVIFHAAAA), serve as a signal peptide directing secretion. A propeptide spanning residues 24–48 (EELEVQDVIQPEDTLTGLATLDEDR) is cleaved from the precursor.

Belongs to the neurotoxin 12 (Hwtx-2) family. 03 (juruin) subfamily. In terms of processing, contains 3 disulfide bonds. Two different connectivities are observed in similar proteins (C1-C3, C2-C5, C4-C6 or C1-C4, C2-C5, C3-C6). In terms of tissue distribution, expressed by the venom gland.

Its subcellular location is the secreted. Functionally, this toxin causes paralysis and death to sheep blowflies. It may inhibit voltage-gated calcium channels. This chain is U1-theraphotoxin-Ct1a, found in Coremiocnemis tropix (Australian tarantula spider).